The chain runs to 496 residues: Glutelin type-A 3 (496 aa).

Positions 1-24 are cleaved as a signal peptide; that stretch reads MATIKFPIVFSVVCLFLLCNGSLA. Cystine bridges form between Cys45/Cys78 and Cys121/Cys312. 2 Cupin type-1 domains span residues 50–248 and 318–467; these read LQAF…GVAR and QNID…EEAR.

It belongs to the 11S seed storage protein (globulins) family. As to quaternary structure, hexamer; each subunit is composed of an acidic and a basic chain derived from a single precursor and linked by a disulfide bond.

In terms of biological role, seed storage protein. In Oryza sativa subsp. japonica (Rice), this protein is Glutelin type-A 3 (GLUA3).